Consider the following 260-residue polypeptide: Ribosomal RNA small subunit methyltransferase J (260 aa).

Residues Glu-125–Arg-126 and Asp-179 each bind S-adenosyl-L-methionine.

This sequence belongs to the methyltransferase superfamily. RsmJ family.

It localises to the cytoplasm. It carries out the reaction guanosine(1516) in 16S rRNA + S-adenosyl-L-methionine = N(2)-methylguanosine(1516) in 16S rRNA + S-adenosyl-L-homocysteine + H(+). Specifically methylates the guanosine in position 1516 of 16S rRNA. The protein is Ribosomal RNA small subunit methyltransferase J of Pseudomonas entomophila (strain L48).